A 310-amino-acid chain; its full sequence is ADP-L-glycero-D-manno-heptose-6-epimerase (310 aa).

Residues 10–11 (FI), 31–32 (DN), Lys-38, Lys-53, 75–79 (EGACS), and Asn-92 each bind NADP(+). Tyr-140 (proton acceptor) is an active-site residue. An NADP(+)-binding site is contributed by Lys-144. Asn-169 contacts substrate. Residues Val-170 and Lys-178 each coordinate NADP(+). The active-site Proton acceptor is Lys-178. Residues Ser-180, His-187, 201–204 (FEGS), Arg-209, and Tyr-272 contribute to the substrate site.

The protein belongs to the NAD(P)-dependent epimerase/dehydratase family. HldD subfamily. Homopentamer. It depends on NADP(+) as a cofactor.

The enzyme catalyses ADP-D-glycero-beta-D-manno-heptose = ADP-L-glycero-beta-D-manno-heptose. Its pathway is nucleotide-sugar biosynthesis; ADP-L-glycero-beta-D-manno-heptose biosynthesis; ADP-L-glycero-beta-D-manno-heptose from D-glycero-beta-D-manno-heptose 7-phosphate: step 4/4. Functionally, catalyzes the interconversion between ADP-D-glycero-beta-D-manno-heptose and ADP-L-glycero-beta-D-manno-heptose via an epimerization at carbon 6 of the heptose. This Salmonella arizonae (strain ATCC BAA-731 / CDC346-86 / RSK2980) protein is ADP-L-glycero-D-manno-heptose-6-epimerase.